We begin with the raw amino-acid sequence, 143 residues long: Hemoglobin anodic subunit alpha (143 aa).

Ser2 is modified (N-acetylserine). A Globin domain is found at 2 to 143 (SLSAKDMAVV…FTLALSERYR (142 aa)). Residue His60 coordinates O2. His89 is a binding site for heme b.

The protein belongs to the globin family. In terms of assembly, heterotetramer of two alpha chains and two beta chains. Red blood cells.

Involved in oxygen transport from gills to the various peripheral tissues. This chain is Hemoglobin anodic subunit alpha (hba), found in Anguilla anguilla (European freshwater eel).